We begin with the raw amino-acid sequence, 348 residues long: Small ribosomal subunit biogenesis GTPase RsgA (348 aa).

The 159-residue stretch at 72-230 folds into the CP-type G domain; that stretch reads RNQLSRPAIA…IADTPGFNQP (159 aa). GTP is bound by residues 121–124 and 172–180; these read TKAD and GPSGVGKSS. 4 residues coordinate Zn(2+): Cys255, Cys260, His262, and Cys268. Positions 305 to 322 are enriched in basic and acidic residues; sequence AKSDRQGQQRLEPLLDAK. The disordered stretch occupies residues 305-348; that stretch reads AKSDRQGQQRLEPLLDAKKYRRRSRRQQHQHVNPMAEEVLDSEW. Residues 323–333 show a composition bias toward basic residues; the sequence is KYRRRSRRQQH.

Belongs to the TRAFAC class YlqF/YawG GTPase family. RsgA subfamily. Monomer. Associates with 30S ribosomal subunit, binds 16S rRNA. Requires Zn(2+) as cofactor.

The protein localises to the cytoplasm. Functionally, one of several proteins that assist in the late maturation steps of the functional core of the 30S ribosomal subunit. Helps release RbfA from mature subunits. May play a role in the assembly of ribosomal proteins into the subunit. Circularly permuted GTPase that catalyzes slow GTP hydrolysis, GTPase activity is stimulated by the 30S ribosomal subunit. The protein is Small ribosomal subunit biogenesis GTPase RsgA of Thermosynechococcus vestitus (strain NIES-2133 / IAM M-273 / BP-1).